The primary structure comprises 390 residues: 2-oxoisovalerate dehydrogenase subunit beta, mitochondrial (390 aa).

Residues 1–48 constitute a mitochondrion transit peptide; sequence MAAVAARAGGLLRLGAAGAERRRRGLRCAALVQGFLQPAVDDASQKRR. Residue tyrosine 150 coordinates thiamine diphosphate. K(+) is bound by residues glycine 176, leucine 178, threonine 179, cysteine 226, and aspartate 229. Position 230 is an N6-acetyllysine (lysine 230). Asparagine 231 is a binding site for K(+). N6-acetyllysine is present on lysine 239.

In terms of assembly, heterotetramer of 2 alpha/BCKDHA and 2 beta chains/BCKDHB that forms the branched-chain alpha-keto acid decarboxylase (E1) component of the BCKD complex. The branched-chain alpha-ketoacid dehydrogenase is a large complex composed of three major building blocks E1, E2 and E3. It is organized around E2, a 24-meric cubic core composed of DBT, to which are associated 6 to 12 copies of E1, and approximately 6 copies of the dehydrogenase E3, a DLD dimer. Thiamine diphosphate serves as cofactor.

The protein localises to the mitochondrion matrix. The catalysed reaction is N(6)-[(R)-lipoyl]-L-lysyl-[protein] + 3-methyl-2-oxobutanoate + H(+) = N(6)-[(R)-S(8)-2-methylpropanoyldihydrolipoyl]-L-lysyl-[protein] + CO2. In terms of biological role, together with BCKDHA forms the heterotetrameric E1 subunit of the mitochondrial branched-chain alpha-ketoacid dehydrogenase (BCKD) complex. The BCKD complex catalyzes the multi-step oxidative decarboxylation of alpha-ketoacids derived from the branched-chain amino-acids valine, leucine and isoleucine producing CO2 and acyl-CoA which is subsequently utilized to produce energy. The E1 subunit catalyzes the first step with the decarboxylation of the alpha-ketoacid forming an enzyme-product intermediate. A reductive acylation mediated by the lipoylamide cofactor of E2 extracts the acyl group from the E1 active site for the next step of the reaction. In Rattus norvegicus (Rat), this protein is 2-oxoisovalerate dehydrogenase subunit beta, mitochondrial.